We begin with the raw amino-acid sequence, 307 residues long: Taste receptor type 2 member 10 (307 aa).

Residues 1–6 lie on the Extracellular side of the membrane; the sequence is MLRVVE. The helical transmembrane segment at 7–27 threads the bilayer; sequence GIFIFVVVSESVFGVLGNGFI. Topologically, residues 28 to 42 are cytoplasmic; it reads GLVNCIDCAKNKLST. A helical membrane pass occupies residues 43–63; sequence IGFILTGLAISRIFLIWIIIT. Over 64–100 the chain is Extracellular; it reads DGFIQIFSPNIYASGNLIEYISYFWVIGNQSSMWFAT. An N-linked (GlcNAc...) asparagine glycan is attached at Asn92. A helical membrane pass occupies residues 101 to 121; the sequence is SLSIFYFLKIANFSNYIFLWL. Residues 122 to 126 are Cytoplasmic-facing; it reads KSRTN. Residues 127–147 traverse the membrane as a helical segment; sequence MVLPFMIVFLLISSLLNFAYI. Over 148 to 179 the chain is Extracellular; it reads AKILNDYKTKNDTVWDLNMYKSEYFIKQILLN. Asn158 is a glycosylation site (N-linked (GlcNAc...) asparagine). A helical membrane pass occupies residues 180-200; the sequence is LGVIFFFTLSLITCIFLIISL. The Cytoplasmic segment spans residues 201-227; that stretch reads WRHNRQMQSNVTGLRDSNTEAHVKAMK. Residues 228-248 form a helical membrane-spanning segment; that stretch reads VLISFIILFILYFIGMAIEIS. The Extracellular portion of the chain corresponds to 249-257; sequence CFTVRENKL. Residues 258–278 traverse the membrane as a helical segment; sequence LLMFGMTTTAIYPWGHSFILI. Residues 279 to 307 are Cytoplasmic-facing; it reads LGNSKLKQASLRVLQQLKCCEKRKNLRVT.

It belongs to the G-protein coupled receptor T2R family. Expressed in subsets of taste receptor cells of the tongue and palate epithelium and exclusively in gustducin-positive cells.

It localises to the membrane. Gustducin-coupled strychnine receptor implicated in the perception of bitter compounds in the oral cavity and the gastrointestinal tract. Signals through PLCB2 and the calcium-regulated cation channel TRPM5. This is Taste receptor type 2 member 10 (TAS2R10) from Homo sapiens (Human).